Here is a 510-residue protein sequence, read N- to C-terminus: UDP-N-acetylmuramate--L-alanine ligase (510 aa).

The tract at residues 1–25 is disordered; sequence MVETVGGKDAVAPAPARSPSPPAKN. 140–146 provides a ligand contact to ATP; the sequence is GTHGKTT.

The protein belongs to the MurCDEF family.

It is found in the cytoplasm. The enzyme catalyses UDP-N-acetyl-alpha-D-muramate + L-alanine + ATP = UDP-N-acetyl-alpha-D-muramoyl-L-alanine + ADP + phosphate + H(+). It functions in the pathway cell wall biogenesis; peptidoglycan biosynthesis. In terms of biological role, cell wall formation. The protein is UDP-N-acetylmuramate--L-alanine ligase of Synechococcus sp. (strain JA-3-3Ab) (Cyanobacteria bacterium Yellowstone A-Prime).